An 862-amino-acid polypeptide reads, in one-letter code: Protein argonaute-2 (862 aa).

A PAZ domain is found at proline 232–alanine 351. Interaction with guide RNA regions lie at residues tyrosine 314–histidine 319 and glycine 527–lysine 569. The region spanning leucine 520 to valine 821 is the Piwi domain. The segment at phenylalanine 590 to proline 593 is interaction with GW182 family members. Residue aspartate 600 participates in a divalent metal cation binding. Positions leucine 653–lysine 663 are interaction with GW182 family members. Position 672 (aspartate 672) interacts with a divalent metal cation. Interaction with guide RNA stretches follow at residues lysine 712 to arginine 713, histidine 756 to arginine 764, and tyrosine 793 to arginine 815. Residue histidine 810 coordinates a divalent metal cation. Positions histidine 825–lysine 847 are disordered. Over residues glycine 830–aspartate 841 the composition is skewed to polar residues.

This sequence belongs to the argonaute family. Ago subfamily. In terms of assembly, component of the RISC loading complex (RLC), or micro-RNA (miRNA) loading complex (miRLC), which is composed of dicer1, ago2 and tarbp2. Note that the trimeric RLC/miRLC is also referred to as RISC. Requires Mg(2+) as cofactor. The cofactor is Mn(2+).

Its subcellular location is the cytoplasm. The protein resides in the P-body. It carries out the reaction Endonucleolytic cleavage to 5'-phosphomonoester.. Required for RNA-mediated gene silencing (RNAi) by the RNA-induced silencing complex (RISC). The 'minimal RISC' appears to include ago2 bound to a short guide RNA such as a microRNA (miRNA) or short interfering RNA (siRNA). These guide RNAs direct RISC to complementary mRNAs that are targets for RISC-mediated gene silencing. The precise mechanism of gene silencing depends on the degree of complementarity between the miRNA or siRNA and its target. Binding of RISC to a perfectly complementary mRNA generally results in silencing due to endonucleolytic cleavage of the mRNA specifically by ago2. Binding of RISC to a partially complementary mRNA results in silencing through inhibition of translation, and this is independent of endonuclease activity. The inhibition of translational initiation leads to the accumulation of the affected mRNA in cytoplasmic processing bodies (P-bodies), where mRNA degradation may subsequently occur. The protein is Protein argonaute-2 (ago2) of Xenopus laevis (African clawed frog).